The primary structure comprises 286 residues: 3-hydroxybutyryl-CoA dehydrogenase (286 aa).

The protein belongs to the 3-hydroxyacyl-CoA dehydrogenase family.

The enzyme catalyses 3-hydroxybutanoyl-CoA + NAD(+) = acetoacetyl-CoA + NADH + H(+). It catalyses the reaction (3S)-3-hydroxybutanoyl-CoA + NADP(+) = acetoacetyl-CoA + NADPH + H(+). Its pathway is lipid metabolism; butanoate metabolism. This chain is 3-hydroxybutyryl-CoA dehydrogenase (fadB2), found in Mycobacterium tuberculosis (strain CDC 1551 / Oshkosh).